A 146-amino-acid polypeptide reads, in one-letter code: Stress enhanced protein 1, chloroplastic (146 aa).

The transit peptide at 1-73 directs the protein to the chloroplast; that stretch reads MALSQVSASL…GNRAASVSIR (73 aa). The next 2 helical transmembrane spans lie at 84-104 and 120-140; these read LDIW…TVEI and LPTV…VFIF.

It belongs to the ELIP/psbS family.

Its subcellular location is the plastid. The protein resides in the chloroplast thylakoid membrane. In terms of biological role, may be involved in non-photochemical quenching, a process that maintains the balance between dissipation and utilization of light energy to minimize generation of oxidizing molecules, thereby protecting the plant against photo-oxidative damage. May play a photoprotective role in the thylakoid membrane in response to light stress. The chain is Stress enhanced protein 1, chloroplastic from Arabidopsis thaliana (Mouse-ear cress).